We begin with the raw amino-acid sequence, 183 residues long: Threonylcarbamoyl-AMP synthase (183 aa).

Positions 1 to 183 (MNFTEIAEKL…LLTDQLIREG (183 aa)) constitute a YrdC-like domain.

It belongs to the SUA5 family. TsaC subfamily.

It is found in the cytoplasm. The enzyme catalyses L-threonine + hydrogencarbonate + ATP = L-threonylcarbamoyladenylate + diphosphate + H2O. In terms of biological role, required for the formation of a threonylcarbamoyl group on adenosine at position 37 (t(6)A37) in tRNAs that read codons beginning with adenine. Catalyzes the conversion of L-threonine, HCO(3)(-)/CO(2) and ATP to give threonylcarbamoyl-AMP (TC-AMP) as the acyladenylate intermediate, with the release of diphosphate. In Actinobacillus succinogenes (strain ATCC 55618 / DSM 22257 / CCUG 43843 / 130Z), this protein is Threonylcarbamoyl-AMP synthase.